The sequence spans 410 residues: Argininosuccinate synthase (410 aa).

10–18 serves as a coordination point for ATP; sequence AYSGGLDTS. The L-citrulline site is built by Tyr-88 and Ser-93. Gly-118 is an ATP binding site. L-aspartate contacts are provided by Thr-120, Asn-124, and Asp-125. Asn-124 is an L-citrulline binding site. Positions 128, 177, 186, 262, and 274 each coordinate L-citrulline.

Belongs to the argininosuccinate synthase family. Type 1 subfamily. Homotetramer.

Its subcellular location is the cytoplasm. It catalyses the reaction L-citrulline + L-aspartate + ATP = 2-(N(omega)-L-arginino)succinate + AMP + diphosphate + H(+). It functions in the pathway amino-acid biosynthesis; L-arginine biosynthesis; L-arginine from L-ornithine and carbamoyl phosphate: step 2/3. The protein is Argininosuccinate synthase of Caldanaerobacter subterraneus subsp. tengcongensis (strain DSM 15242 / JCM 11007 / NBRC 100824 / MB4) (Thermoanaerobacter tengcongensis).